Here is a 294-residue protein sequence, read N- to C-terminus: Ribosomal RNA small subunit methyltransferase A (294 aa).

The S-adenosyl-L-methionine site is built by asparagine 29, valine 31, glycine 56, glutamate 77, aspartate 107, and asparagine 126.

The protein belongs to the class I-like SAM-binding methyltransferase superfamily. rRNA adenine N(6)-methyltransferase family. RsmA subfamily.

The protein resides in the cytoplasm. It catalyses the reaction adenosine(1518)/adenosine(1519) in 16S rRNA + 4 S-adenosyl-L-methionine = N(6)-dimethyladenosine(1518)/N(6)-dimethyladenosine(1519) in 16S rRNA + 4 S-adenosyl-L-homocysteine + 4 H(+). Its function is as follows. Specifically dimethylates two adjacent adenosines (A1518 and A1519) in the loop of a conserved hairpin near the 3'-end of 16S rRNA in the 30S particle. May play a critical role in biogenesis of 30S subunits. The sequence is that of Ribosomal RNA small subunit methyltransferase A from Mycobacterium sp. (strain JLS).